A 124-amino-acid chain; its full sequence is Putative melanoma-associated antigen 5P (124 aa).

The segment covering 1 to 14 has biased composition (basic and acidic residues); sequence MSLEQKSQHCKPEE. Disordered regions lie at residues 1–69 and 82–103; these read MSLE…QGAS and QSIK…DPES. The 122-residue stretch at 3-124 folds into the MAGE domain; that stretch reads LEQKSQHCKP…DLIHFLLLKY (122 aa). 2 stretches are compositionally biased toward polar residues: residues 30 to 44 and 82 to 100; these read AATT…SSSP and QSIK…TSPD.

As to expression, expressed in many tumors of several types, such as melanoma, head and neck squamous cell carcinoma, lung carcinoma and breast carcinoma, but not in normal tissues except for testes.

Its function is as follows. May negatively regulates apoptosis. In Homo sapiens (Human), this protein is Putative melanoma-associated antigen 5P.